The following is a 1081-amino-acid chain: Mediator of RNA polymerase II transcription subunit 15 (1081 aa).

S2 is subject to N-acetylserine. The interaction with GCN4 stretch occupies residues L25–A49. The disordered stretch occupies residues Q238–Q286. S335 carries the phosphoserine modification. 11 consecutive repeat copies span residues Q422–A423, Q424–A425, Q426–A427, Q428–A429, Q430–A431, Q432–A433, Q434–A435, Q436–A437, Q438–A439, Q440–A441, and Q442–A443. The 30 X 2 AA approximate tandem repeats of Q-A stretch occupies residues Q422–A481. One copy of the 12; approximate repeat lies at A444–Q445. A 13; approximate repeat occupies A446 to A447. 17 consecutive repeat copies span residues Q448–A449, Q450–A451, Q452–A453, Q454–A455, Q456–A457, Q458–A459, Q460–A461, Q462–A463, Q464–A465, Q466–A467, Q468–A469, Q470–A471, Q472–A473, Q474–A475, Q476–A477, Q478–A479, and Q480–A481. Residues Q476–Q497 show a composition bias toward low complexity. Disordered regions lie at residues Q476–T505 and Q692–M712. S736, S752, S783, S785, and S789 each carry phosphoserine. Residues P744–Q836 form a disordered region. Polar residues predominate over residues A749–Q836. T793 carries the post-translational modification Phosphothreonine. 5 positions are modified to phosphoserine: S831, S1003, S1008, S1018, and S1034. A disordered region spans residues D1026–N1055.

It belongs to the Mediator complex subunit 15 family. Component of the Mediator complex, which is composed of at least 21 subunits that form three structurally distinct submodules. The Mediator head module contains MED6, MED8, MED11, SRB4/MED17, SRB5/MED18, ROX3/MED19, SRB2/MED20 and SRB6/MED22, the middle module contains MED1, MED4, NUT1/MED5, MED7, CSE2/MED9, NUT2/MED10, SRB7/MED21 and SOH1/MED31, and the tail module contains MED2, PGD1/MED3, RGR1/MED14, GAL11/MED15 and SIN4/MED16. The head and the middle modules interact directly with RNA polymerase II, whereas the elongated tail module interacts with gene-specific regulatory proteins. GAL11/MED15 interacts with the activator GAL4; the interaction is direct. GAL11/MED15 interacts (via multiple regions) with the activator GCN4; the interaction is direct.

It localises to the nucleus. Its function is as follows. Component of the Mediator complex, a coactivator involved in the regulated transcription of nearly all RNA polymerase II-dependent genes. Mediator functions as a bridge to convey information from gene-specific regulatory proteins to the basal RNA polymerase II transcription machinery. The Mediator complex, having a compact conformation in its free form, is recruited to promoters by direct interactions with regulatory proteins and serves for the assembly of a functional pre-initiation complex with RNA polymerase II and the general transcription factors. The Mediator complex unfolds to an extended conformation and partially surrounds RNA polymerase II, specifically interacting with the unphosphorylated form of the C-terminal domain (CTD) of RNA polymerase II. The Mediator complex dissociates from the RNA polymerase II holoenzyme and stays at the promoter when transcriptional elongation begins. It has an important role in the negative regulation of Ty transcription. This Saccharomyces cerevisiae (strain ATCC 204508 / S288c) (Baker's yeast) protein is Mediator of RNA polymerase II transcription subunit 15.